An 805-amino-acid chain; its full sequence is Ubiquitin carboxyl-terminal hydrolase 5 (805 aa).

A Rhodanese domain is found at His-159–Ser-283. The segment at Arg-359–Thr-380 is disordered. The USP domain maps to Val-446 to Ile-804. The active-site Nucleophile is Cys-455. The Proton acceptor role is filled by His-761.

The protein belongs to the peptidase C19 family.

The enzyme catalyses Thiol-dependent hydrolysis of ester, thioester, amide, peptide and isopeptide bonds formed by the C-terminal Gly of ubiquitin (a 76-residue protein attached to proteins as an intracellular targeting signal).. The chain is Ubiquitin carboxyl-terminal hydrolase 5 (UBP5) from Saccharomyces cerevisiae (strain ATCC 204508 / S288c) (Baker's yeast).